The primary structure comprises 226 residues: Thioredoxin domain-containing protein 9 (226 aa).

In terms of domain architecture, Thioredoxin spans 52-180 (LEALKKAQQQ…TTETLEWRLG (129 aa)). A phosphoserine mark is found at Ser188, Ser221, and Ser223.

As to quaternary structure, forms ternary complexes with the chaperonin TCP1 complex, spanning the cylindrical chaperonin cavity and contacting at least 2 subunits.

The protein localises to the cytoplasm. Its subcellular location is the nucleus. It localises to the cytoskeleton. It is found in the microtubule organizing center. The protein resides in the centrosome. The protein localises to the midbody. Its function is as follows. Significantly diminishes the chaperonin TCP1 complex ATPase activity, thus negatively impacts protein folding, including that of actin or tubulin. The protein is Thioredoxin domain-containing protein 9 (TXNDC9) of Bos taurus (Bovine).